We begin with the raw amino-acid sequence, 89 residues long: Acylphosphatase (89 aa).

The 86-residue stretch at 4 to 89 (CVRCLIAGRV…IPEIQMFEVR (86 aa)) folds into the Acylphosphatase-like domain. Active-site residues include arginine 19 and asparagine 37.

The protein belongs to the acylphosphatase family.

It carries out the reaction an acyl phosphate + H2O = a carboxylate + phosphate + H(+). This Nitrosococcus oceani (strain ATCC 19707 / BCRC 17464 / JCM 30415 / NCIMB 11848 / C-107) protein is Acylphosphatase (acyP).